A 371-amino-acid polypeptide reads, in one-letter code: 4-hydroxy-3-methylbut-2-en-1-yl diphosphate synthase (flavodoxin) (371 aa).

Cysteine 270, cysteine 273, cysteine 305, and glutamate 312 together coordinate [4Fe-4S] cluster.

Belongs to the IspG family. Requires [4Fe-4S] cluster as cofactor.

It carries out the reaction (2E)-4-hydroxy-3-methylbut-2-enyl diphosphate + oxidized [flavodoxin] + H2O + 2 H(+) = 2-C-methyl-D-erythritol 2,4-cyclic diphosphate + reduced [flavodoxin]. Its pathway is isoprenoid biosynthesis; isopentenyl diphosphate biosynthesis via DXP pathway; isopentenyl diphosphate from 1-deoxy-D-xylulose 5-phosphate: step 5/6. Converts 2C-methyl-D-erythritol 2,4-cyclodiphosphate (ME-2,4cPP) into 1-hydroxy-2-methyl-2-(E)-butenyl 4-diphosphate. The sequence is that of 4-hydroxy-3-methylbut-2-en-1-yl diphosphate synthase (flavodoxin) from Shewanella halifaxensis (strain HAW-EB4).